A 343-amino-acid polypeptide reads, in one-letter code: Dihydroorotate dehydrogenase (quinone) (343 aa).

FMN contacts are provided by residues 61-65 (AGLDK) and threonine 85. Lysine 65 is a binding site for substrate. 110 to 114 (NRMGF) lines the substrate pocket. Positions 138 and 171 each coordinate FMN. Substrate is bound at residue asparagine 171. Serine 174 acts as the Nucleophile in catalysis. Position 176 (asparagine 176) interacts with substrate. FMN-binding residues include lysine 216 and threonine 244. Residue 245–246 (NT) coordinates substrate. Residues glycine 267, glycine 296, and 317 to 318 (YS) each bind FMN.

This sequence belongs to the dihydroorotate dehydrogenase family. Type 2 subfamily. In terms of assembly, monomer. FMN is required as a cofactor.

It is found in the cell membrane. It catalyses the reaction (S)-dihydroorotate + a quinone = orotate + a quinol. The protein operates within pyrimidine metabolism; UMP biosynthesis via de novo pathway; orotate from (S)-dihydroorotate (quinone route): step 1/1. Catalyzes the conversion of dihydroorotate to orotate with quinone as electron acceptor. In Pseudomonas syringae pv. syringae (strain B728a), this protein is Dihydroorotate dehydrogenase (quinone).